Reading from the N-terminus, the 157-residue chain is Large ribosomal subunit protein uL15 (157 aa).

Belongs to the universal ribosomal protein uL15 family. In terms of assembly, part of the 50S ribosomal subunit.

In terms of biological role, binds to the 23S rRNA. The sequence is that of Large ribosomal subunit protein uL15 from Ehrlichia ruminantium (strain Gardel).